The following is a 187-amino-acid chain: Calmodulin-like protein 30 (187 aa).

The segment at 21–47 (KPSRMFSRDRQSSGLSSPGPGGFSQPS) is disordered. Residues 32-47 (SSGLSSPGPGGFSQPS) are compositionally biased toward low complexity. 4 EF-hand domains span residues 46–81 (PSVN…LGQE), 82–117 (RAIE…SGGI), 129–152 (FDLN…LGER), and 153–187 (CSLE…SNNV). Residues Asp-59, Asp-61, Asp-63, Lys-65, Glu-70, Asp-95, Asp-97, Asp-99, Glu-106, Asp-130, Asn-132, Asp-134, Lys-136, Glu-141, Asp-166, Asp-168, Asp-170, and Glu-177 each contribute to the Ca(2+) site.

This sequence belongs to the calmodulin family.

Its function is as follows. Potential calcium sensor. The protein is Calmodulin-like protein 30 of Arabidopsis thaliana (Mouse-ear cress).